The sequence spans 446 residues: MGRSYYVDDRVEKYFSKLVQQQKACITGLIIGQYSSQRDYAVLTAQTPQKEDQNEEKKPGLSKLEEIDDEWVSMHASQVGRMLPGGLMVLGVFLMTTPDLSKDAQTILRKLVFAVEKSSMKNRLWNFDEDDVSERVTLHICSSTKKITCRTYDINDPKSTPKPADWKYQNSVLSWLTVDCNVRVDVTIPLTSPSLTYQERQKSIRLGLVKWTKEIEDSVVLFNGQYKDKNGDLFEEQKKSSRSSSHYSPQIITANFLNASPLIDNTRSTALVQPCKSSLTIQGVMKCRGFIHSNRPKVKDAMQAIKRDLLNTIQDRCELLFEDMMLNGPSNENDACPLPQRVFVPINGSNLKLCDYLFGDETTSDLQSHFLEIMDQEVEQNELDFTEKKCELAHPEKRESEPASQHLESKPENKARSSSTSLLNKGLVISTIVASIAIIISFYYIM.

The chain crosses the membrane as a helical span at residues 76–96 (ASQVGRMLPGGLMVLGVFLMT). The span at 394–415 (HPEKRESEPASQHLESKPENKA) shows a compositional bias: basic and acidic residues. A disordered region spans residues 394–417 (HPEKRESEPASQHLESKPENKARS). Residues 426–446 (GLVISTIVASIAIIISFYYIM) traverse the membrane as a helical segment.

The protein belongs to the ODR-4 family.

It localises to the membrane. Functionally, may play a role in the trafficking of a subset of G-protein coupled receptors. This Xenopus laevis (African clawed frog) protein is Protein odr-4 homolog (odr4).